The primary structure comprises 834 residues: Inner nuclear membrane protein SRC1 (834 aa).

The tract at residues 68–292 (DEGIVKMDRP…TANGTGHSTP (225 aa)) is disordered. Over residues 77 to 86 (PSSSPSIASP) the composition is skewed to low complexity. Residues serine 78, serine 80, and serine 85 each carry the phosphoserine modification. Acidic residues-rich tracts occupy residues 114–127 (VSNDDDDDDDDDDD) and 142–153 (DTDEVDDEEDDV). Over residues 154–170 (ITSSSNKSDTNDFQQNS) the composition is skewed to polar residues. Serine 181 carries the post-translational modification Phosphoserine. Over residues 188–198 (NSKENKIDNKH) the composition is skewed to basic and acidic residues. Residues serine 203, serine 204, and serine 206 each carry the phosphoserine modification. Residues 243–266 (IKNTNRKPVSMDNFNDSLTSSGTE) are compositionally biased toward polar residues. The residue at position 301 (serine 301) is a Phosphoserine. A disordered region spans residues 307-364 (PQKEVPSTILVPEVEQQEPSQSERTPSLFSSEGSGSESEAPLLPEITTPGPHQPMGNT). Low complexity-rich tracts occupy residues 317-329 (VPEVEQQEPSQSE) and 336-345 (SSEGSGSESE). Threonine 394 bears the Phosphothreonine mark. Position 427 is a phosphoserine (serine 427). Transmembrane regions (helical) follow at residues 455–475 (LLALFLFCIFIVIPLLFGLWY) and 708–728 (IWLMFLLIVISKVIEIKLKNY).

It is found in the nucleus inner membrane. In terms of biological role, plays a role in sister chromatid separation. The chain is Inner nuclear membrane protein SRC1 (SRC1) from Saccharomyces cerevisiae (strain ATCC 204508 / S288c) (Baker's yeast).